Consider the following 205-residue polypeptide: Dephospho-CoA kinase (205 aa).

One can recognise a DPCK domain in the interval 7-205 (IIGITGRIAS…QEIINYERFE (199 aa)). 15 to 20 (ASGKDA) contributes to the ATP binding site.

This sequence belongs to the CoaE family.

The protein localises to the cytoplasm. The catalysed reaction is 3'-dephospho-CoA + ATP = ADP + CoA + H(+). It participates in cofactor biosynthesis; coenzyme A biosynthesis; CoA from (R)-pantothenate: step 5/5. Catalyzes the phosphorylation of the 3'-hydroxyl group of dephosphocoenzyme A to form coenzyme A. This Borrelia garinii subsp. bavariensis (strain ATCC BAA-2496 / DSM 23469 / PBi) (Borreliella bavariensis) protein is Dephospho-CoA kinase.